The primary structure comprises 425 residues: Fe(2+) transport protein 3, chloroplastic (425 aa).

A helical transmembrane segment spans residues 65 to 85 (FVAIASILLAGAAGVTIPLIG). The Cytoplasmic segment spans residues 86-97 (RNRRFLQTDGNL). A helical membrane pass occupies residues 98–118 (FVTAKAFAAGVILATGFVHML). The Lumenal segment spans residues 119–137 (AGGTEALKNPCLPDFPWSK). The helical transmembrane segment at 138–158 (FPFPGFFAMIAALITLFVDFM) threads the bilayer. The Cytoplasmic segment spans residues 159 to 269 (GTQYYERKQE…GLDAVNGARH (111 aa)). The chain crosses the membrane as a helical span at residues 270 to 290 (IVVSQVLELGIVSHSIIIGLS). At 291–301 (LGVSQSPCTIR) the chain is on the lumenal side. The chain crosses the membrane as a helical span at residues 302 to 322 (PLIAALSFHQFFEGFALGGCI). Residues 323 to 333 (SQAQFRNKSAT) are Cytoplasmic-facing. A helical transmembrane segment spans residues 334–354 (IMACFFALTTPIGIGIGTAVA). At 355–369 (SSFNSHSVGALVTEG) the chain is on the lumenal side. Residues 370 to 390 (ILDSLSAGILVYMALVDLIAA) form a helical membrane-spanning segment. Topologically, residues 391-404 (DFLSTKMRCNFRLQ) are cytoplasmic. The chain crosses the membrane as a helical span at residues 405–425 (IVSYVMLFLGAGLMSSLAIWA).

The protein belongs to the ZIP transporter (TC 2.A.5) family.

It localises to the plastid. The protein localises to the chloroplast thylakoid membrane. In terms of biological role, may play a role in the transport of iron in the plastids. This chain is Fe(2+) transport protein 3, chloroplastic (IRT3), found in Arabidopsis thaliana (Mouse-ear cress).